A 461-amino-acid chain; its full sequence is Cysteine--tRNA ligase (461 aa).

Zn(2+) is bound at residue Cys28. A 'HIGH' region motif is present at residues 30–40 (VTIYDLCHIGH). Cys209, His234, and Glu238 together coordinate Zn(2+). The short motif at 266–270 (KMSKS) is the 'KMSKS' region element. Lys269 contacts ATP.

This sequence belongs to the class-I aminoacyl-tRNA synthetase family. In terms of assembly, monomer. It depends on Zn(2+) as a cofactor.

The protein resides in the cytoplasm. The enzyme catalyses tRNA(Cys) + L-cysteine + ATP = L-cysteinyl-tRNA(Cys) + AMP + diphosphate. The chain is Cysteine--tRNA ligase from Hamiltonella defensa subsp. Acyrthosiphon pisum (strain 5AT).